Reading from the N-terminus, the 185-residue chain is ATP synthase subunit b (185 aa).

The helical transmembrane segment at 28-48 (VVLVGFAVLMYIVVKFVVPMF) threads the bilayer.

The protein belongs to the ATPase B chain family. F-type ATPases have 2 components, F(1) - the catalytic core - and F(0) - the membrane proton channel. F(1) has five subunits: alpha(3), beta(3), gamma(1), delta(1), epsilon(1). F(0) has three main subunits: a(1), b(2) and c(10-14). The alpha and beta chains form an alternating ring which encloses part of the gamma chain. F(1) is attached to F(0) by a central stalk formed by the gamma and epsilon chains, while a peripheral stalk is formed by the delta and b chains.

It localises to the cell membrane. In terms of biological role, f(1)F(0) ATP synthase produces ATP from ADP in the presence of a proton or sodium gradient. F-type ATPases consist of two structural domains, F(1) containing the extramembraneous catalytic core and F(0) containing the membrane proton channel, linked together by a central stalk and a peripheral stalk. During catalysis, ATP synthesis in the catalytic domain of F(1) is coupled via a rotary mechanism of the central stalk subunits to proton translocation. Functionally, component of the F(0) channel, it forms part of the peripheral stalk, linking F(1) to F(0). The protein is ATP synthase subunit b of Paenarthrobacter aurescens (strain TC1).